Here is a 212-residue protein sequence, read N- to C-terminus: Imidazole glycerol phosphate synthase subunit HisH 2 (212 aa).

Residues 4–211 (HLGLIDYGMG…LDWLQRGAPI (208 aa)) form the Glutamine amidotransferase type-1 domain. Cysteine 82 acts as the Nucleophile in catalysis. Catalysis depends on residues histidine 186 and glutamate 188.

Heterodimer of HisH and HisF.

It localises to the cytoplasm. It catalyses the reaction 5-[(5-phospho-1-deoxy-D-ribulos-1-ylimino)methylamino]-1-(5-phospho-beta-D-ribosyl)imidazole-4-carboxamide + L-glutamine = D-erythro-1-(imidazol-4-yl)glycerol 3-phosphate + 5-amino-1-(5-phospho-beta-D-ribosyl)imidazole-4-carboxamide + L-glutamate + H(+). It carries out the reaction L-glutamine + H2O = L-glutamate + NH4(+). It participates in amino-acid biosynthesis; L-histidine biosynthesis; L-histidine from 5-phospho-alpha-D-ribose 1-diphosphate: step 5/9. Functionally, IGPS catalyzes the conversion of PRFAR and glutamine to IGP, AICAR and glutamate. The HisH subunit provides the glutamine amidotransferase activity that produces the ammonia necessary to HisF for the synthesis of IGP and AICAR. In Parasynechococcus marenigrum (strain WH8102), this protein is Imidazole glycerol phosphate synthase subunit HisH 2 (hisH2).